The primary structure comprises 155 residues: Small ribosomal subunit protein uS17 (155 aa).

An N-acetylalanine modification is found at alanine 2.

Belongs to the universal ribosomal protein uS17 family.

The chain is Small ribosomal subunit protein uS17 from Drosophila pseudoobscura pseudoobscura (Fruit fly).